A 197-amino-acid chain; its full sequence is Xanthine phosphoribosyltransferase (197 aa).

Xanthine-binding residues include Leu-20 and Thr-27. 128 to 132 (ANGQA) contacts 5-phospho-alpha-D-ribose 1-diphosphate. Lys-156 serves as a coordination point for xanthine.

It belongs to the purine/pyrimidine phosphoribosyltransferase family. Xpt subfamily. As to quaternary structure, homodimer.

It is found in the cytoplasm. It carries out the reaction XMP + diphosphate = xanthine + 5-phospho-alpha-D-ribose 1-diphosphate. It participates in purine metabolism; XMP biosynthesis via salvage pathway; XMP from xanthine: step 1/1. In terms of biological role, converts the preformed base xanthine, a product of nucleic acid breakdown, to xanthosine 5'-monophosphate (XMP), so it can be reused for RNA or DNA synthesis. The protein is Xanthine phosphoribosyltransferase of Lactococcus lactis subsp. lactis (strain IL1403) (Streptococcus lactis).